A 117-amino-acid chain; its full sequence is Large ribosomal subunit protein bL19 (117 aa).

Belongs to the bacterial ribosomal protein bL19 family.

Functionally, this protein is located at the 30S-50S ribosomal subunit interface and may play a role in the structure and function of the aminoacyl-tRNA binding site. The chain is Large ribosomal subunit protein bL19 from Blochmanniella floridana.